A 229-amino-acid chain; its full sequence is Type III pantothenate kinase (229 aa).

6 to 13 (NIGNSRQH) lines the ATP pocket. Residues tyrosine 77 and 81 to 84 (GIDR) each bind substrate. The active-site Proton acceptor is the aspartate 83. Aspartate 103 is a binding site for K(+). Residue threonine 106 participates in ATP binding. Threonine 159 lines the substrate pocket.

It belongs to the type III pantothenate kinase family. In terms of assembly, homodimer. NH4(+) serves as cofactor. Requires K(+) as cofactor.

It is found in the cytoplasm. The catalysed reaction is (R)-pantothenate + ATP = (R)-4'-phosphopantothenate + ADP + H(+). Its pathway is cofactor biosynthesis; coenzyme A biosynthesis; CoA from (R)-pantothenate: step 1/5. Catalyzes the phosphorylation of pantothenate (Pan), the first step in CoA biosynthesis. This chain is Type III pantothenate kinase, found in Gloeobacter violaceus (strain ATCC 29082 / PCC 7421).